We begin with the raw amino-acid sequence, 509 residues long: Bestrophin-2a (509 aa).

The Cytoplasmic segment spans residues 1-31; it reads MTVTYTARVANARFGGFSQLLLLWRGSIYKL. Ca(2+) is bound at residue alanine 10. A helical membrane pass occupies residues 32–51; the sequence is LWRELLCFLGFYMALSAAYR. Residues 52–60 lie on the Extracellular side of the membrane; that stretch reads FVLTEGQKR. The chain crosses the membrane as a helical span at residues 61 to 82; that stretch reads YFEKLVIYCDQYASLIPVSFVL. Residues 83 to 238 are Cytoplasmic-facing; the sequence is GFYVTLVVNR…WISVPLVYTQ (156 aa). A helical membrane pass occupies residues 239-255; the sequence is VVTIALYSYFLACLIGR. At 256–274 the chain is on the extracellular side; it reads QFLDPAQGYKDHDLDLCVP. Residues 275–288 form a helical membrane-spanning segment; that stretch reads IFTLLQFFFYAGWL. Topologically, residues 289–509 are cytoplasmic; sequence KVAEQLINPF…PIGEEEENLA (221 aa). 4 residues coordinate Ca(2+): glutamine 293, asparagine 296, aspartate 301, and aspartate 304. The segment at 454 to 509 is disordered; the sequence is DPGLPEPEAPPPAGPEPLTLIPGPVEPFSIVTMPGPRGPAPPWLPSPIGEEEENLA. 2 stretches are compositionally biased toward pro residues: residues 457–468 and 489–498; these read LPEPEAPPPAGP and PRGPAPPWLP.

Belongs to the anion channel-forming bestrophin (TC 1.A.46) family. Calcium-sensitive chloride channel subfamily. Pentamer. Interacts with GLUL; this interaction tethers a fraction of GLUL to the membrane, causing a decrease of cytosolic glutamine synthase (GS) activity and inhibits the chloride channel activity of BEST2 by affecting the gating at the aperture in the absence of intracellular glutamate. In terms of tissue distribution, mainly confined to the retinal pigment epithelium. Expressed in colon.

The protein resides in the cell membrane. It is found in the basolateral cell membrane. It carries out the reaction chloride(in) = chloride(out). The enzyme catalyses hydrogencarbonate(in) = hydrogencarbonate(out). It catalyses the reaction L-glutamate(out) = L-glutamate(in). The catalysed reaction is iodide(out) = iodide(in). It carries out the reaction L-glutamine(out) = L-glutamine(in). Chloride channel activity is allosterically inhibited by GLUL/glutamine synthase (GS) which affects the gating at the aperture in the absence of intracellular glutamate. Inhibitory effect of GLUL is relieved upon increasing of L-glutamate intracellular level. In terms of biological role, ligand-gated anion channel that allows the movement of anions across cell membranes when activated by calcium (Ca2+). Transports a large specter of anions, namely mediates the movement of chloride, L-glutamate and iodide. Calcium-binding triggers the dilation of the aperture, but calcium-dependent gating is only effective when the size of the passing anion is bigger than the closed aperture. Mediates the calcium-activated hydrogencarbonate movement and participates in colonic hydrogencarbonate secretion concomitant with mucin secretion. In non-pigmented epithelium (NPE), mediates the efflux of intracellular L-glutamate; binding of intracellular L-glutamate activates and open both the neck and the aperture of the channel, leading to L-glutamate exit promoting chloride influx movement from the extracellular side in trans. Also exhibits a directional permeability for intracellular glutamine, in a similar manner as for L-glutamate. The chain is Bestrophin-2a from Homo sapiens (Human).